The chain runs to 209 residues: Thymidylate kinase (209 aa).

An ATP-binding site is contributed by 11 to 18; it reads GIEGAGKT.

This sequence belongs to the thymidylate kinase family.

The catalysed reaction is dTMP + ATP = dTDP + ADP. Phosphorylation of dTMP to form dTDP in both de novo and salvage pathways of dTTP synthesis. The protein is Thymidylate kinase (tmk) of Pasteurella multocida (strain Pm70).